The sequence spans 117 residues: Small ribosomal subunit protein bS16 (117 aa).

Positions leucine 81 to proline 90 are enriched in basic residues. Residues leucine 81 to valine 117 form a disordered region.

Belongs to the bacterial ribosomal protein bS16 family.

The chain is Small ribosomal subunit protein bS16 from Bartonella quintana (strain Toulouse) (Rochalimaea quintana).